A 295-amino-acid chain; its full sequence is Ribose-phosphate pyrophosphokinase (295 aa).

Residues 46-48 and 101-102 contribute to the ATP site; these read DGE and RQ. Mg(2+) is bound by residues histidine 132 and aspartate 171. Residue lysine 194 is part of the active site. D-ribose 5-phosphate-binding residues include arginine 196 and aspartate 220.

Belongs to the ribose-phosphate pyrophosphokinase family. Class III (archaeal) subfamily. The cofactor is Mg(2+).

The protein localises to the cytoplasm. The catalysed reaction is D-ribose 5-phosphate + ATP = 5-phospho-alpha-D-ribose 1-diphosphate + AMP + H(+). It participates in metabolic intermediate biosynthesis; 5-phospho-alpha-D-ribose 1-diphosphate biosynthesis; 5-phospho-alpha-D-ribose 1-diphosphate from D-ribose 5-phosphate (route I): step 1/1. Its function is as follows. Involved in the biosynthesis of the central metabolite phospho-alpha-D-ribosyl-1-pyrophosphate (PRPP) via the transfer of pyrophosphoryl group from ATP to 1-hydroxyl of ribose-5-phosphate (Rib-5-P). The sequence is that of Ribose-phosphate pyrophosphokinase from Methanosarcina mazei (strain ATCC BAA-159 / DSM 3647 / Goe1 / Go1 / JCM 11833 / OCM 88) (Methanosarcina frisia).